The following is an 883-amino-acid chain: MSENIDDIKNEDSKKIKIIKLRKKVVKIVTHNDLNGKNNSNSSINLDKHNNKVEYSQNRDNRAGGYSQNRDNRTGGYSQNRDNRTGGYSQNRDNRTGGYSQNRDNRTGGYSQNRDNRTGGYSQNRDNRTGGYSQNRDNRTGGYSQNRDNRTGGYSQNRDNRTGGYSQNRDNRTGGYSQNRDNRTGGYSQNRDSFPSQYQVSTKKTYVGKNTSQNKYTTTPMSFRRVIKAKVPSIVSSASSVDSENIKELNRKLGEKKKQQQESQKSYKRKKAETESKTIEQKVFEQLQKKKRENLANPIPKSIDIMGSITVSDLARKMNLKSSDLIAKLMALGVMVTINEKIDSDTATILVEEYGSKVNVVSIYDETFIEEEVEDQSKRIEKPPVITIMGHVDHGKTKLLSVLQNIDINQTESGGITQHIGAYTIVYNGREITFLDTPGHEAFTMMRSRGAQVTDIVVLVVSAIDGVMPQTIEAINHAKEANVPIIVAINKIDLPDSNPDKVKHQLSEYDLVPEDWGGDTIFVLISALKNIGISELLDMILLQSDMMLLKANPSKRAIGKVLDAKIDLGRGIVCSVIIEDGTLYIGDSFVGGVCYGKVKALISDKGVSVKSVGPAKAISVLGFSSMPQAGDPFQVTKTEKEAKLISSKRQDLKKYESSKNVKKVTMLNLYDSIKEGALKELKIILKADVQGSVEALKNSLEKLTNDEVRVRVVHSSAGVITETDISFASASDAIVIGFHVRPTSKAQILADQEKVEIRKYNVIYDAISDVKSVLEGMLEPDVEQQFIGFAEVRAVINVPKVGVIAGCYVSRGIIKRDAITNVMRDGLQIHSGKISSLKRFKDDVKEVAEQYECGIMIDNYANIKEGDIIEAFEVKKIKKTFKT.

The segment covering 32–45 (NDLNGKNNSNSSIN) has biased composition (polar residues). 2 disordered regions span residues 32 to 216 (NDLN…QNKY) and 251 to 275 (RKLG…AETE). The segment covering 46–62 (LDKHNNKVEYSQNRDNR) has biased composition (basic and acidic residues). Residues 75 to 216 (GGYSQNRDNR…VGKNTSQNKY (142 aa)) show a composition bias toward polar residues. The segment covering 251 to 260 (RKLGEKKKQQ) has biased composition (basic and acidic residues). The tr-type G domain maps to 381–554 (EKPPVITIMG…DMMLLKANPS (174 aa)). Residues 390–397 (GHVDHGKT) form a G1 region. A GTP-binding site is contributed by 390 to 397 (GHVDHGKT). Positions 415–419 (GITQH) are G2. Positions 436–439 (DTPG) are G3. GTP-binding positions include 436 to 440 (DTPGH) and 490 to 493 (NKID). The segment at 490–493 (NKID) is G4. Residues 526 to 528 (SAL) form a G5 region.

The protein belongs to the TRAFAC class translation factor GTPase superfamily. Classic translation factor GTPase family. IF-2 subfamily.

It is found in the cytoplasm. Its function is as follows. One of the essential components for the initiation of protein synthesis. Protects formylmethionyl-tRNA from spontaneous hydrolysis and promotes its binding to the 30S ribosomal subunits. Also involved in the hydrolysis of GTP during the formation of the 70S ribosomal complex. This chain is Translation initiation factor IF-2, found in Borrelia garinii subsp. bavariensis (strain ATCC BAA-2496 / DSM 23469 / PBi) (Borreliella bavariensis).